The chain runs to 426 residues: Glutamate-1-semialdehyde 2,1-aminomutase (426 aa).

Lysine 265 bears the N6-(pyridoxal phosphate)lysine mark.

The protein belongs to the class-III pyridoxal-phosphate-dependent aminotransferase family. HemL subfamily. Homodimer. Pyridoxal 5'-phosphate serves as cofactor.

Its subcellular location is the cytoplasm. The enzyme catalyses (S)-4-amino-5-oxopentanoate = 5-aminolevulinate. It participates in porphyrin-containing compound metabolism; protoporphyrin-IX biosynthesis; 5-aminolevulinate from L-glutamyl-tRNA(Glu): step 2/2. The polypeptide is Glutamate-1-semialdehyde 2,1-aminomutase (Salmonella choleraesuis (strain SC-B67)).